Here is a 358-residue protein sequence, read N- to C-terminus: HTH-type transcriptional regulator IpsA (358 aa).

Positions 8–63 constitute an HTH lacI-type domain; it reads GTLASIAAKLGISRTTVSNAYNRPEQLSAELRQRILDTAEDMGYLGPDPVARSLRT. Positions 10–29 form a DNA-binding region, H-T-H motif; it reads LASIAAKLGISRTTVSNAYN.

Homodimer.

Myo-inositol causes the dissociation of the IpsA-DNA complex in vitro. Functionally, plays a role in the regulation of cell wall biogenesis. Inositol-dependent transcriptional activator of ino1, which encodes inositol phosphate synthase. Also regulates other target genes, which are most likely involved in the synthesis of inositol-derived cell wall components and mycothiol. Acts by binding to a conserved palindromic motif within the promoter regions. The sequence is that of HTH-type transcriptional regulator IpsA from Corynebacterium glutamicum (strain ATCC 13032 / DSM 20300 / JCM 1318 / BCRC 11384 / CCUG 27702 / LMG 3730 / NBRC 12168 / NCIMB 10025 / NRRL B-2784 / 534).